We begin with the raw amino-acid sequence, 318 residues long: Pyrimidine-specific ribonucleoside hydrolase RihA (318 aa).

H240 is a catalytic residue.

Belongs to the IUNH family. RihA subfamily.

In terms of biological role, hydrolyzes cytidine or uridine to ribose and cytosine or uracil, respectively. The sequence is that of Pyrimidine-specific ribonucleoside hydrolase RihA from Shewanella baltica (strain OS155 / ATCC BAA-1091).